The primary structure comprises 63 residues: Large ribosomal subunit protein uL29 (63 aa).

This sequence belongs to the universal ribosomal protein uL29 family.

The polypeptide is Large ribosomal subunit protein uL29 (Stutzerimonas stutzeri (strain A1501) (Pseudomonas stutzeri)).